The following is an 88-amino-acid chain: Small ribosomal subunit protein bS20 (88 aa).

The protein belongs to the bacterial ribosomal protein bS20 family.

Its function is as follows. Binds directly to 16S ribosomal RNA. The sequence is that of Small ribosomal subunit protein bS20 from Methylorubrum populi (strain ATCC BAA-705 / NCIMB 13946 / BJ001) (Methylobacterium populi).